The primary structure comprises 993 residues: DNA-binding protein SMUBP-2 (993 aa).

At alanine 2 the chain carries N-acetylalanine. ATP is bound by residues 214-221 (GPPGTGKT), glutamine 403, tyrosine 442, and glutamate 571. Residues 638-785 (TAFEYLDDIV…KRRFITVSKR (148 aa)) are SS DNA-binding. Disordered regions lie at residues 651-723 (YSHE…VESQ), 782-828 (VSKR…PDQP), and 841-879 (VRSA…DLPT). Polar residues-rich tracts occupy residues 653 to 662 (HENSQGSSHA) and 669 to 681 (PATS…QRQE). The region spanning 723–786 (QDGVDHFRAM…RRFITVSKRA (64 aa)) is the R3H domain. The segment covering 818–828 (PPREQRGPDQP) has biased composition (basic and acidic residues). Residues 842-859 (RSAQGQPASKEQQASGQQ) show a composition bias toward polar residues. A Nuclear localization signal motif is present at residues 864-868 (KKKKK). The AN1-type zinc finger occupies 891–940 (VKADNTCGFAKCTAGVTTLGQFCQLCSRRYCLSHHLPEIHGCGERARAHA). Zn(2+) contacts are provided by cysteine 897, cysteine 902, cysteine 913, cysteine 916, cysteine 921, histidine 924, histidine 930, and cysteine 932. A disordered region spans residues 971-993 (RRLDKKLSELSNQRTSRRKERGT).

Belongs to the DNA2/NAM7 helicase family. Homooligomer. Interacts with RUVBL1. Interacts with RUVBL2. Interacts with GTF3C1. Interacts with ABT1. Interacts with ribosomes. As to expression, expressed in all tissues examined. Expressed in the developing and adult human brain, with highest expression in the cerebellum. Moderately expressed in fibroblasts.

It is found in the nucleus. It localises to the cytoplasm. The protein resides in the cell projection. The protein localises to the axon. It carries out the reaction ATP + H2O = ADP + phosphate + H(+). Its function is as follows. 5' to 3' helicase that unwinds RNA and DNA duplexes in an ATP-dependent reaction. Specific to 5'-phosphorylated single-stranded guanine-rich sequences. May play a role in RNA metabolism, ribosome biogenesis or initiation of translation. May play a role in regulation of transcription. Interacts with tRNA-Tyr. The chain is DNA-binding protein SMUBP-2 (IGHMBP2) from Homo sapiens (Human).